Consider the following 268-residue polypeptide: Octanoyltransferase (268 aa).

The BPL/LPL catalytic domain maps to 47 to 243 (PETPDQVWLV…ALCEVLAAHE (197 aa)). Substrate-binding positions include 87–94 (RGGQITYH), 159–161 (ALG), and 172–174 (GVS). The active-site Acyl-thioester intermediate is the cysteine 190.

This sequence belongs to the LipB family.

The protein localises to the cytoplasm. It catalyses the reaction octanoyl-[ACP] + L-lysyl-[protein] = N(6)-octanoyl-L-lysyl-[protein] + holo-[ACP] + H(+). It functions in the pathway protein modification; protein lipoylation via endogenous pathway; protein N(6)-(lipoyl)lysine from octanoyl-[acyl-carrier-protein]: step 1/2. Catalyzes the transfer of endogenously produced octanoic acid from octanoyl-acyl-carrier-protein onto the lipoyl domains of lipoate-dependent enzymes. Lipoyl-ACP can also act as a substrate although octanoyl-ACP is likely to be the physiological substrate. This is Octanoyltransferase from Cupriavidus necator (strain ATCC 17699 / DSM 428 / KCTC 22496 / NCIMB 10442 / H16 / Stanier 337) (Ralstonia eutropha).